Reading from the N-terminus, the 468-residue chain is Adenosylhomocysteinase (468 aa).

Substrate contacts are provided by Thr57, Asp132, and Glu194. 195-197 (TTT) serves as a coordination point for NAD(+). Residues Lys224 and Asp228 each coordinate substrate. Residues Asn229, 258–263 (GFGDVG), Glu281, Asn316, 337–339 (IGH), and Asn382 contribute to the NAD(+) site.

It belongs to the adenosylhomocysteinase family. Requires NAD(+) as cofactor.

Its subcellular location is the cytoplasm. It catalyses the reaction S-adenosyl-L-homocysteine + H2O = L-homocysteine + adenosine. Its pathway is amino-acid biosynthesis; L-homocysteine biosynthesis; L-homocysteine from S-adenosyl-L-homocysteine: step 1/1. Functionally, may play a key role in the regulation of the intracellular concentration of adenosylhomocysteine. This is Adenosylhomocysteinase from Methylobacterium nodulans (strain LMG 21967 / CNCM I-2342 / ORS 2060).